The sequence spans 119 residues: Venom allergen 2 (119 aa).

It belongs to the ant venom allergen 2/4 family. As to quaternary structure, homodimer; disulfide-linked. As to expression, expressed by the venom gland.

It localises to the secreted. The protein is Venom allergen 2 of Solenopsis richteri (Black imported fire ant).